Reading from the N-terminus, the 341-residue chain is Phosphoribosylformylglycinamidine cyclo-ligase (341 aa).

This sequence belongs to the AIR synthase family.

It localises to the cytoplasm. The enzyme catalyses 2-formamido-N(1)-(5-O-phospho-beta-D-ribosyl)acetamidine + ATP = 5-amino-1-(5-phospho-beta-D-ribosyl)imidazole + ADP + phosphate + H(+). It participates in purine metabolism; IMP biosynthesis via de novo pathway; 5-amino-1-(5-phospho-D-ribosyl)imidazole from N(2)-formyl-N(1)-(5-phospho-D-ribosyl)glycinamide: step 2/2. The chain is Phosphoribosylformylglycinamidine cyclo-ligase from Lachnoclostridium phytofermentans (strain ATCC 700394 / DSM 18823 / ISDg) (Clostridium phytofermentans).